The sequence spans 141 residues: Arsenate reductase (141 aa).

Cys12 functions as the Nucleophile; cysteine thioarsenate intermediate in the catalytic mechanism.

Belongs to the ArsC family. As to quaternary structure, monomer in solution.

It catalyses the reaction [glutaredoxin]-dithiol + arsenate + glutathione + H(+) = glutathionyl-S-S-[glutaredoxin] + arsenite + H2O. Its activity is regulated as follows. Inhibited by the thiol reagents iodoacetate (IAA) and N-ethylmaleimide (NEM). Activity is rapidly inactivated by the histidine-modifying reagent diethylpyrocarbonate (DEPC). Its function is as follows. Involved in resistance to arsenate. Catalyzes the reduction of arsenate [As(V)] to arsenite [As(III)]. The resulting arsenite is then extruded from the cell via the ArsAB transport system. The protein is Arsenate reductase of Escherichia coli.